The primary structure comprises 222 residues: Thymidylate kinase (222 aa).

ATP contacts are provided by residues 29 to 34 (RVGKST) and Arg-111. The tract at residues 146 to 170 (LSMSSEDATKRGEYGGERYEKLEFQ) is LID.

Belongs to the thymidylate kinase family. As to quaternary structure, homodimer. Mg(2+) is required as a cofactor.

It catalyses the reaction dTMP + ATP = dTDP + ADP. Its pathway is pyrimidine metabolism; dTTP biosynthesis. Catalyzes the phosphorylation of thymidine monophosphate (dTMP) to thymidine diphosphate (dTDP), the immediate precursor for the DNA building block dTTP, with ATP as the preferred phosphoryl donor in the presence of Mg(2+). This Dictyostelium discoideum (Social amoeba) protein is Thymidylate kinase (dtymk).